The following is a 740-amino-acid chain: Transcription activator of gluconeogenesis NCU03938 (740 aa).

The disordered stretch occupies residues 1–66 (MPDDVGPAEA…KYDPKDPLRP (66 aa)). A compositionally biased stretch (acidic residues) spans 19-37 (SDNEYDETEVTTKDDDDEK). Basic and acidic residues predominate over residues 52–65 (GDQKKKYDPKDPLR). The zn(2)-C6 fungal-type DNA-binding region spans 75 to 103 (CYACQRAHLTCGDERPCQRCIKRGLAEAC). Disordered regions lie at residues 333 to 405 (PAGP…RQRD), 532 to 579 (NSDT…KEQP), and 639 to 674 (APTASGGSGSSNGTVVNGGPDSSPAGKTEKERPTGV). The span at 337–351 (TSLQSPSTENNSPQP) shows a compositional bias: polar residues. Residues 475–546 (ALFEHEEFMH…SISSKGGRGG (72 aa)) form the PAS domain. The span at 639–658 (APTASGGSGSSNGTVVNGGP) shows a compositional bias: low complexity.

The protein belongs to the ERT1/acuK family.

It is found in the nucleus. In terms of biological role, transcription factor which regulates nonfermentable carbon utilization. Activator of gluconeogenetic genes. This is Transcription activator of gluconeogenesis NCU03938 from Neurospora crassa (strain ATCC 24698 / 74-OR23-1A / CBS 708.71 / DSM 1257 / FGSC 987).